The sequence spans 372 residues: Ligninase LG6 (372 aa).

The first 21 residues, M1–G21, serve as a signal peptide directing secretion. Residues A22–R28 constitute a propeptide that is removed on maturation. 2 cysteine pairs are disulfide-bonded: C31–C43 and C62–C148. Residue H75 is the Proton acceptor of the active site. Ca(2+) contacts are provided by D76, G94, D96, and S98. H204 contributes to the heme b binding site. The Ca(2+) site is built by S205, D222, T224, V227, and D229. C277 and C345 are oxidised to a cystine. A glycan (N-linked (GlcNAc...) asparagine) is linked at N285. Over residues T352–T361 the composition is skewed to low complexity. The segment at T352–A372 is disordered.

Belongs to the peroxidase family. Ligninase subfamily. Requires heme b as cofactor. Ca(2+) is required as a cofactor.

The catalysed reaction is 1-(3,4-dimethoxyphenyl)-2-(2-methoxyphenoxy)propane-1,3-diol + H2O2 = 3,4-dimethoxybenzaldehyde + guaiacol + glycolaldehyde + H2O. The enzyme catalyses 2 (3,4-dimethoxyphenyl)methanol + H2O2 = 2 (3,4-dimethoxyphenyl)methanol radical + 2 H2O. The protein operates within secondary metabolite metabolism; lignin degradation. Its function is as follows. Depolymerization of lignin. Catalyzes the C(alpha)-C(beta) cleavage of the propyl side chains of lignin. This Phanerodontia chrysosporium (White-rot fungus) protein is Ligninase LG6 (GLG6).